The following is a 483-amino-acid chain: Cobyric acid synthase (483 aa).

The 179-residue stretch at 252-430 folds into the GATase cobBQ-type domain; it reads ALQVVAVAYP…LHRLFDSGPF (179 aa). C333 (nucleophile) is an active-site residue. The active site involves H422.

It belongs to the CobB/CobQ family. CobQ subfamily.

It functions in the pathway cofactor biosynthesis; adenosylcobalamin biosynthesis. Catalyzes amidations at positions B, D, E, and G on adenosylcobyrinic A,C-diamide. NH(2) groups are provided by glutamine, and one molecule of ATP is hydrogenolyzed for each amidation. The polypeptide is Cobyric acid synthase (Halorhodospira halophila (strain DSM 244 / SL1) (Ectothiorhodospira halophila (strain DSM 244 / SL1))).